Reading from the N-terminus, the 265-residue chain is tRNA pseudouridine synthase A (265 aa).

The active-site Nucleophile is the D52. Position 110 (Y110) interacts with substrate. The segment at 244–265 (FYRDGPPARTPGGTTDAEEDEG) is disordered.

The protein belongs to the tRNA pseudouridine synthase TruA family. In terms of assembly, homodimer.

It catalyses the reaction uridine(38/39/40) in tRNA = pseudouridine(38/39/40) in tRNA. Its function is as follows. Formation of pseudouridine at positions 38, 39 and 40 in the anticodon stem and loop of transfer RNAs. In Myxococcus xanthus, this protein is tRNA pseudouridine synthase A.